The sequence spans 295 residues: Voltage-gated potassium channel (295 aa).

Residues 1–38 (MSVERWVFPGCSVMARFRRGLSDLGGRVRNIGDVMEHP) lie on the Cytoplasmic side of the membrane. A helical membrane pass occupies residues 39 to 63 (LVELGVSYAALLSVIVVVVEYTMQL). Topologically, residues 64–67 (SGEY) are extracellular. The chain crosses the membrane as a helical span at residues 68–92 (LVRLYLVDLILVIILWADYAYRAYK). The Cytoplasmic portion of the chain corresponds to 93–96 (SGDP). The segment at residues 97-105 (AGYVKKTLY) is an intramembrane region (helical). The Extracellular segment spans residues 106 to 108 (EIP). A helical; Voltage-sensor membrane pass occupies residues 109–125 (ALVPAGLLALIEGHLAG). Over 126-128 (LGL) the chain is Cytoplasmic. Residues 129 to 145 (FRLVRLLRFLRILLIIS) form a helical; Voltage-sensor membrane-spanning segment. Over 146–159 (RGSKFLSAIADAAD) the chain is Cytoplasmic. A helical membrane pass occupies residues 160-184 (KIRFYHLFGAVMLTVLYGAFAIYIV). Residues 185–195 (EYPDPNSSIKS) lie on the Extracellular side of the membrane. The pore-forming intramembrane region spans 196 to 208 (VFDALWWAVVTAT). Positions 209–214 (TVGYGD) match the Selectivity filter motif. Topologically, residues 209 to 221 (TVGYGDVVPATPI) are extracellular. Residues 222 to 253 (GKVIGIAVMLTGISALTLLIGTVSNMFQKILV) form a helical membrane-spanning segment. The Cytoplasmic portion of the chain corresponds to 254–295 (GEPEPSCSPAKLAEMVSSMSEEEFEEFVRTLKNLRRLENSMK).

The protein belongs to the potassium channel family.

It localises to the cell membrane. Its function is as follows. Mediates a strong voltage-dependent potassium ion permeability of excitable membranes. Assuming opened or closed conformations in response to the voltage difference across the membrane, the protein forms a potassium-selective channel through which potassium ions may pass in accordance with their electrochemical gradient. The polypeptide is Voltage-gated potassium channel (Aeropyrum pernix (strain ATCC 700893 / DSM 11879 / JCM 9820 / NBRC 100138 / K1)).